Consider the following 278-residue polypeptide: Release factor glutamine methyltransferase (278 aa).

S-adenosyl-L-methionine-binding positions include 117–121, D140, and N184; that span reads GTGSG. 184 to 187 serves as a coordination point for substrate; it reads NPPY.

This sequence belongs to the protein N5-glutamine methyltransferase family. PrmC subfamily.

It catalyses the reaction L-glutaminyl-[peptide chain release factor] + S-adenosyl-L-methionine = N(5)-methyl-L-glutaminyl-[peptide chain release factor] + S-adenosyl-L-homocysteine + H(+). Functionally, methylates the class 1 translation termination release factors RF1/PrfA and RF2/PrfB on the glutamine residue of the universally conserved GGQ motif. This is Release factor glutamine methyltransferase from Bacteroides thetaiotaomicron (strain ATCC 29148 / DSM 2079 / JCM 5827 / CCUG 10774 / NCTC 10582 / VPI-5482 / E50).